Here is a 1512-residue protein sequence, read N- to C-terminus: Bifunctional glutamate/proline--tRNA ligase (1512 aa).

The glutamate--tRNA ligase stretch occupies residues 164 to 759 (GTKWDVSGNR…SSVLYSRVAV (596 aa)). The short motif at 204–214 (PEASGYLHIGH) is the 'HIGH' region element. Residues 294–315 (TPAEQMKAEREQRTESKHRKNS) are disordered. Residues 299–308 (MKAEREQRTE) are compositionally biased toward basic and acidic residues. N6-acetyllysine; alternate is present on Lys-300. Residue Lys-300 is modified to N6-malonyllysine; alternate. Residue Thr-355 is modified to Phosphothreonine. N6-acetyllysine is present on Lys-417. The 'KMSKS' region signature appears at 432–436 (VLSKR). Phosphoserine is present on Ser-434. N6-acetyllysine occurs at positions 498, 535, 542, and 637. Residues 709–736 (EMPTSGSKEKTKVEISKKETSSAPKERP) are compositionally biased toward basic and acidic residues. Residues 709–742 (EMPTSGSKEKTKVEISKKETSSAPKERPAPAVSS) form a disordered region. The WHEP-TRS 1 domain occupies 749-805 (DSSVLYSRVAVQGDVVRELKAKKAPKEDIDAAVKQLLTLKAEYKEKTGQEYKPGNPS). The tract at residues 760–956 (QGDVVRELKA…GIEYKPVSAT (197 aa)) is 3 X 57 AA approximate repeats. N6-acetyllysine is present on Lys-788. Positions 795 to 819 (TGQEYKPGNPSAAAVQTVSTKSSSN) are disordered. Polar residues predominate over residues 808–819 (AVQTVSTKSSSN). Residues 822–878 (ESTSLYNKVAAQGEVVRKLKAEKAPKAKVTEAVECLLSLKAEYKEKTGKDYVPGQPP) form the WHEP-TRS 2 domain. Lys-861 is modified (N6-acetyllysine). 2 disordered regions span residues 869 to 898 (GKDY…GAEK) and 956 to 1011 (TGAE…PKKQ). At Tyr-872 the chain carries Phosphotyrosine. Over residues 878–892 (PASQNSHSNPVSNAQ) the composition is skewed to polar residues. Phosphoserine is present on Ser-885. The 57-residue stretch at 900–956 (EAKVLFDRVACQGEVVRKLKAEKASKDQVDSAVQELLQLKAQYKSLTGIEYKPVSAT) folds into the WHEP-TRS 3 domain. The segment covering 958–976 (AEDKDKKKKEKENKSEKQN) has biased composition (basic and acidic residues). Positions 997–1006 (LSSGGAGEGQ) are enriched in gly residues. Residue Ser-998 is modified to Phosphoserine. Ser-999 is modified (phosphoserine; by RPS6KB1). The segment at 1007–1512 (GPKKQTRLGL…KFYTLFGRSY (506 aa)) is proline--tRNA ligase. L-proline contacts are provided by residues 1121-1123 (TSE) and Arg-1152. ATP is bound by residues Arg-1152, Glu-1154, Arg-1163, Thr-1164, Gln-1237, and Thr-1240. At Arg-1152 the chain carries Omega-N-methylarginine. Gln-1237 contributes to the Mg(2+) binding site. His-1242 is an L-proline binding site. ATP is bound by residues Thr-1276 and Arg-1278. Phosphoserine is present on Ser-1350. Zn(2+) is bound by residues Cys-1448, Cys-1453, Cys-1495, and Cys-1497. Lys-1503 is subject to N6-acetyllysine.

In the N-terminal section; belongs to the class-I aminoacyl-tRNA synthetase family. Glutamate--tRNA ligase type 2 subfamily. The protein in the C-terminal section; belongs to the class-II aminoacyl-tRNA synthetase family. Homodimer. Part of the aminoacyl-tRNA synthetase multienzyme complex, also know as multisynthetase complex, that is composed of the tRNA ligases for Arg (RARS1), Asp (DARS1), Gln (QARS1), Ile (IARS1), Leu (LARS1), Lys (KARS1), Met (MARS1) the bifunctional ligase for Glu and Pro (EPRS1) and the auxiliary subunits AIMP1/p43, AIMP2/p38 and EEF1E1/p18. Forms a linear complex that contains MARS1, EEF1E1, EPRS1 and AIMP2 that is at the core of the multisubunit complex. Interacts with TARS3. Interacts with DUS2L. Component of the GAIT complex which is composed of EPRS1, RPL13A and GAPDH. Interacts (phosphorylated at Ser-999) with SLC27A1; mediates the translocation of SLC27A1 from the cytoplasm to the plasma membrane thereby increasing the uptake of long-chain fatty acids. Phosphorylated at Ser-999 by RPS6KB1; triggers EPRS1 release from the aminoacyl-tRNA synthetase multienzyme complex. In monocytes, the IFN-gamma-induced phosphorylation at Ser-999 releases EPRS1 from the aminoacyl-tRNA synthetase multienzyme complex, allowing its association with the GAIT complex. Phosphorylation at Ser-999 is specifically required for the RPL13A-mediated interaction of the GAIT complex with eIF4G. Phosphorylation at Ser-999 by RPS6KB1, is also induced by insulin through activation of the mTORC1 signaling pathway and promotes the interaction of EPRS1 with SLC27A1.

The protein localises to the cytoplasm. The protein resides in the cytosol. It localises to the membrane. It carries out the reaction tRNA(Glu) + L-glutamate + ATP = L-glutamyl-tRNA(Glu) + AMP + diphosphate. The enzyme catalyses tRNA(Pro) + L-proline + ATP = L-prolyl-tRNA(Pro) + AMP + diphosphate. Its function is as follows. Multifunctional protein which primarily functions within the aminoacyl-tRNA synthetase multienzyme complex, also known as multisynthetase complex. Within the complex it catalyzes the attachment of both L-glutamate and L-proline to their cognate tRNAs in a two-step reaction where the amino acid is first activated by ATP to form a covalent intermediate with AMP. Subsequently, the activated amino acid is transferred to the acceptor end of the cognate tRNA to form L-glutamyl-tRNA(Glu) and L-prolyl-tRNA(Pro). Upon interferon-gamma stimulation, EPRS1 undergoes phosphorylation, causing its dissociation from the aminoacyl-tRNA synthetase multienzyme complex. It is recruited to form the GAIT complex, which binds to stem loop-containing GAIT elements found in the 3'-UTR of various inflammatory mRNAs, such as ceruloplasmin. The GAIT complex inhibits the translation of these mRNAs, allowing interferon-gamma to redirect the function of EPRS1 from protein synthesis to translation inhibition in specific cell contexts. Furthermore, it can function as a downstream effector in the mTORC1 signaling pathway, by promoting the translocation of SLC27A1 from the cytoplasm to the plasma membrane where it mediates the uptake of long-chain fatty acid by adipocytes. Thereby, EPRS1 also plays a role in fat metabolism and more indirectly influences lifespan. The protein is Bifunctional glutamate/proline--tRNA ligase of Mus musculus (Mouse).